The following is a 325-amino-acid chain: Biotin synthase (325 aa).

One can recognise a Radical SAM core domain in the interval Val-49–Arg-279. [4Fe-4S] cluster-binding residues include Cys-66, Cys-70, and Cys-73. Residues Cys-144, Cys-204, and Arg-274 each contribute to the [2Fe-2S] cluster site.

The protein belongs to the radical SAM superfamily. Biotin synthase family. In terms of assembly, homodimer. It depends on [4Fe-4S] cluster as a cofactor. [2Fe-2S] cluster is required as a cofactor.

It catalyses the reaction (4R,5S)-dethiobiotin + (sulfur carrier)-SH + 2 reduced [2Fe-2S]-[ferredoxin] + 2 S-adenosyl-L-methionine = (sulfur carrier)-H + biotin + 2 5'-deoxyadenosine + 2 L-methionine + 2 oxidized [2Fe-2S]-[ferredoxin]. It functions in the pathway cofactor biosynthesis; biotin biosynthesis; biotin from 7,8-diaminononanoate: step 2/2. Functionally, catalyzes the conversion of dethiobiotin (DTB) to biotin by the insertion of a sulfur atom into dethiobiotin via a radical-based mechanism. This Carboxydothermus hydrogenoformans (strain ATCC BAA-161 / DSM 6008 / Z-2901) protein is Biotin synthase.